A 155-amino-acid polypeptide reads, in one-letter code: SsrA-binding protein (155 aa).

Residues 135-155 (KRESLKRRQDQRDIQRAMKNY) are disordered.

It belongs to the SmpB family.

The protein localises to the cytoplasm. Functionally, required for rescue of stalled ribosomes mediated by trans-translation. Binds to transfer-messenger RNA (tmRNA), required for stable association of tmRNA with ribosomes. tmRNA and SmpB together mimic tRNA shape, replacing the anticodon stem-loop with SmpB. tmRNA is encoded by the ssrA gene; the 2 termini fold to resemble tRNA(Ala) and it encodes a 'tag peptide', a short internal open reading frame. During trans-translation Ala-aminoacylated tmRNA acts like a tRNA, entering the A-site of stalled ribosomes, displacing the stalled mRNA. The ribosome then switches to translate the ORF on the tmRNA; the nascent peptide is terminated with the 'tag peptide' encoded by the tmRNA and targeted for degradation. The ribosome is freed to recommence translation, which seems to be the essential function of trans-translation. In Trichormus variabilis (strain ATCC 29413 / PCC 7937) (Anabaena variabilis), this protein is SsrA-binding protein.